Reading from the N-terminus, the 135-residue chain is Protein NrdI (135 aa).

It belongs to the NrdI family.

Probably involved in ribonucleotide reductase function. The sequence is that of Protein NrdI from Salmonella gallinarum (strain 287/91 / NCTC 13346).